The primary structure comprises 284 residues: Tropomyosin (284 aa).

A coiled-coil region spans residues 1–284 (MDAIKKKMLM…DQALNELHNM (284 aa)). Disordered stretches follow at residues 106 to 134 (LNST…ENRQ) and 186 to 221 (AETK…EEAY). 2 stretches are compositionally biased toward basic and acidic residues: residues 112-134 (KLTD…ENRQ) and 186-198 (AETK…DELK).

Belongs to the tropomyosin family. As to quaternary structure, homodimer.

Tropomyosin, in association with the troponin complex, plays a central role in the calcium dependent regulation of muscle contraction. The chain is Tropomyosin (TPM) from Branchiostoma belcheri (Amphioxus).